Consider the following 354-residue polypeptide: uncharacterized protein (354 aa).

The protein belongs to the asfivirus B354L family.

This is an uncharacterized protein from Ornithodoros (relapsing fever ticks).